The following is a 101-amino-acid chain: MFIKKNDKVKVIAGKDKGKEGTVEKVFPAQDRVIVKGINIVKKHQKPTNANPNGGIVEVEAPIHVSNVMLIDPSNNEATRVGFKVVDGKKVRVSKKSGEIL.

It belongs to the universal ribosomal protein uL24 family. Part of the 50S ribosomal subunit.

Functionally, one of two assembly initiator proteins, it binds directly to the 5'-end of the 23S rRNA, where it nucleates assembly of the 50S subunit. Its function is as follows. One of the proteins that surrounds the polypeptide exit tunnel on the outside of the subunit. The chain is Large ribosomal subunit protein uL24 from Ligilactobacillus salivarius (strain UCC118) (Lactobacillus salivarius).